A 285-amino-acid polypeptide reads, in one-letter code: Small ribosomal subunit protein uS2 (285 aa).

Positions 229 to 285 (RHNGKSNAAEEPMAEWERELLEQHEEQKSQDAAPAEQSAPAAEAPAETEQKDAPAAE) are disordered. A compositionally biased stretch (basic and acidic residues) spans 243–257 (EWERELLEQHEEQKS). Residues 260–275 (AAPAEQSAPAAEAPAE) are compositionally biased toward low complexity. Residues 276–285 (TEQKDAPAAE) are compositionally biased toward basic and acidic residues.

Belongs to the universal ribosomal protein uS2 family.

In Kocuria rhizophila (strain ATCC 9341 / DSM 348 / NBRC 103217 / DC2201), this protein is Small ribosomal subunit protein uS2.